A 503-amino-acid chain; its full sequence is UDP-N-acetylmuramoylalanine--D-glutamate ligase (503 aa).

129–135 serves as a coordination point for ATP; that stretch reads GTNGKTT.

This sequence belongs to the MurCDEF family.

It is found in the cytoplasm. The catalysed reaction is UDP-N-acetyl-alpha-D-muramoyl-L-alanine + D-glutamate + ATP = UDP-N-acetyl-alpha-D-muramoyl-L-alanyl-D-glutamate + ADP + phosphate + H(+). Its pathway is cell wall biogenesis; peptidoglycan biosynthesis. In terms of biological role, cell wall formation. Catalyzes the addition of glutamate to the nucleotide precursor UDP-N-acetylmuramoyl-L-alanine (UMA). The protein is UDP-N-acetylmuramoylalanine--D-glutamate ligase of Burkholderia multivorans (strain ATCC 17616 / 249).